Consider the following 368-residue polypeptide: DNA replication and repair protein RecF (368 aa).

30-37 (GNNAQGKT) contributes to the ATP binding site.

Belongs to the RecF family.

It is found in the cytoplasm. The RecF protein is involved in DNA metabolism; it is required for DNA replication and normal SOS inducibility. RecF binds preferentially to single-stranded, linear DNA. It also seems to bind ATP. The sequence is that of DNA replication and repair protein RecF from Streptococcus pyogenes serotype M6 (strain ATCC BAA-946 / MGAS10394).